Consider the following 327-residue polypeptide: Tetraacyldisaccharide 4'-kinase (327 aa).

52-59 contributes to the ATP binding site; it reads TLGGAGKT.

This sequence belongs to the LpxK family.

The catalysed reaction is a lipid A disaccharide + ATP = a lipid IVA + ADP + H(+). It functions in the pathway glycolipid biosynthesis; lipid IV(A) biosynthesis; lipid IV(A) from (3R)-3-hydroxytetradecanoyl-[acyl-carrier-protein] and UDP-N-acetyl-alpha-D-glucosamine: step 6/6. In terms of biological role, transfers the gamma-phosphate of ATP to the 4'-position of a tetraacyldisaccharide 1-phosphate intermediate (termed DS-1-P) to form tetraacyldisaccharide 1,4'-bis-phosphate (lipid IVA). The chain is Tetraacyldisaccharide 4'-kinase from Methylorubrum extorquens (strain CM4 / NCIMB 13688) (Methylobacterium extorquens).